A 476-amino-acid chain; its full sequence is tRNA(Ile)-lysidine synthase (476 aa).

ATP is bound at residue 30 to 35; it reads SGGPDS.

The protein belongs to the tRNA(Ile)-lysidine synthase family.

The protein resides in the cytoplasm. The catalysed reaction is cytidine(34) in tRNA(Ile2) + L-lysine + ATP = lysidine(34) in tRNA(Ile2) + AMP + diphosphate + H(+). Functionally, ligates lysine onto the cytidine present at position 34 of the AUA codon-specific tRNA(Ile) that contains the anticodon CAU, in an ATP-dependent manner. Cytidine is converted to lysidine, thus changing the amino acid specificity of the tRNA from methionine to isoleucine. The polypeptide is tRNA(Ile)-lysidine synthase (Bacillus cereus (strain ATCC 10987 / NRS 248)).